Reading from the N-terminus, the 837-residue chain is GRIP1-associated protein 1 (837 aa).

Alanine 2 bears the N-acetylalanine mark. Positions 4–158 (ALSEEEFQRM…ALQERYGKEA (155 aa)) form a coiled coil. 4 disordered regions span residues 161 to 180 (PSAV…PISL), 555 to 577 (KGKE…ERDG), 647 to 666 (SEMN…VSSF), and 677 to 702 (SSAI…LSDE). Positions 204-637 (EQLQGLESSK…LQEILTNSKS (434 aa)) form a coiled coil. The segment covering 648–666 (EMNSPSRTQTGDSSSVSSF) has biased composition (polar residues). A phosphoserine mark is found at serine 651, serine 662, serine 664, serine 665, serine 684, serine 686, serine 687, and serine 688. Positions 678 to 690 (SAIPARSLSSSPQ) are enriched in low complexity. Coiled-coil stretches lie at residues 697 to 731 (AELS…LEVS) and 781 to 810 (DENL…KDME). Serine 826 bears the Phosphoserine mark.

In terms of assembly, interacts with GRIP1, GRIP2 and AMPA receptors. Interacts (via C-terminus) with MAPK8/JNK1 and with MAP3K1/MEKK1; the interaction promotes MAP3K1-mediated phosphorylation of MAPK8. Interacts (via N-terminus) with RAB4A (in GTP-bound form). Interacts (via C-terminus) with STX12. Proteolytically cleaved by caspase-3. A minor C-terminal proteolytic fragment of 30 kDa is produced. Proteolytic cleavage is required for JNK signaling activation. Expressed in the central nervous system; especially in neurons.

It is found in the early endosome membrane. It localises to the recycling endosome membrane. The protein resides in the cell projection. The protein localises to the axon. Its subcellular location is the dendrite. It is found in the synapse. In terms of biological role, regulates the endosomal recycling back to the neuronal plasma membrane, possibly by connecting early and late recycling endosomal domains and promoting segregation of recycling endosomes from early endosomal membranes. Involved in the localization of recycling endosomes to dendritic spines, thereby playing a role in the maintenance of dendritic spine morphology. Required for the activity-induced AMPA receptor recycling to dendrite membranes and for long-term potentiation and synaptic plasticity. Functions as a scaffold protein in neurons to facilitate MAP3K1/MEKK1-mediated activation of the JNK1 kinase by phosphorylation, possibly by bringing MAP3K1/MEKK1 and JNK1 in close proximity. The sequence is that of GRIP1-associated protein 1 (Gripap1) from Rattus norvegicus (Rat).